Consider the following 681-residue polypeptide: Serine/threonine-protein kinase PAK 6 (681 aa).

Disordered stretches follow at residues 1 to 30 (MFRK…DPKE), 200 to 256 (QSSP…ESSL), and 268 to 355 (TAAT…PRTW). A CRIB domain is found at 12–25 (ISAPQNFQHRVHTS). The tract at residues 26 to 406 (FDPKEGKFVG…VVDQGDPRLL (381 aa)) is linker. 2 stretches are compositionally biased toward low complexity: residues 201–212 (SSPPGASPPTGT) and 268–278 (TAATAPPSSSK). Over residues 308-333 (SLPSDQPVGTFSPLTTSDTSSPQKSL) the composition is skewed to polar residues. The Protein kinase domain occupies 407–658 (LDSYVKIGEG…AQELLDHPFL (252 aa)). ATP is bound by residues 413 to 421 (IGEGSTGIV) and K436. D526 (proton acceptor) is an active-site residue. S560 carries the phosphoserine; by autocatalysis modification.

It belongs to the protein kinase superfamily. STE Ser/Thr protein kinase family. STE20 subfamily. As to quaternary structure, interacts tightly with GTP-bound but not GDP-bound CDC42/p21 and RAC1. Interacts with the androgen receptor AR. Interacts with IQGAP1 and PPM1B. Autophosphorylated. Phosphorylated by MAP2K6/MAPKK6, leading to PAK6 activation.

Its subcellular location is the cytoplasm. The protein localises to the nucleus. The catalysed reaction is L-seryl-[protein] + ATP = O-phospho-L-seryl-[protein] + ADP + H(+). The enzyme catalyses L-threonyl-[protein] + ATP = O-phospho-L-threonyl-[protein] + ADP + H(+). Its function is as follows. Serine/threonine protein kinase that plays a role in the regulation of gene transcription. The kinase activity is induced by various effectors including AR or MAP2K6/MAPKK6. Phosphorylates the DNA-binding domain of androgen receptor/AR and thereby inhibits AR-mediated transcription. Also inhibits ESR1-mediated transcription. May play a role in cytoskeleton regulation by interacting with IQGAP1. May protect cells from apoptosis through phosphorylation of BAD. The polypeptide is Serine/threonine-protein kinase PAK 6 (PAK6) (Pongo abelii (Sumatran orangutan)).